A 205-amino-acid chain; its full sequence is Octanoyltransferase (205 aa).

The BPL/LPL catalytic domain maps to 30–205; that stretch reads ERTADEIWLL…QALRARLGYA (176 aa). Substrate is bound by residues 69–76, 136–138, and 149–151; these read RGGQVTYH, SLG, and GLA. Catalysis depends on cysteine 167, which acts as the Acyl-thioester intermediate.

This sequence belongs to the LipB family.

Its subcellular location is the cytoplasm. It carries out the reaction octanoyl-[ACP] + L-lysyl-[protein] = N(6)-octanoyl-L-lysyl-[protein] + holo-[ACP] + H(+). The protein operates within protein modification; protein lipoylation via endogenous pathway; protein N(6)-(lipoyl)lysine from octanoyl-[acyl-carrier-protein]: step 1/2. Functionally, catalyzes the transfer of endogenously produced octanoic acid from octanoyl-acyl-carrier-protein onto the lipoyl domains of lipoate-dependent enzymes. Lipoyl-ACP can also act as a substrate although octanoyl-ACP is likely to be the physiological substrate. This chain is Octanoyltransferase, found in Ectopseudomonas mendocina (strain ymp) (Pseudomonas mendocina).